A 245-amino-acid polypeptide reads, in one-letter code: Chymotrypsin B (245 aa).

Cystine bridges form between cysteine 1/cysteine 121, cysteine 42/cysteine 58, cysteine 135/cysteine 201, cysteine 167/cysteine 182, and cysteine 191/cysteine 220. The propeptide occupies 14 to 15 (AR). The Peptidase S1 domain maps to 16–243 (IVNGEEAVPH…LRGWVDQILA (228 aa)). Residues histidine 57 and aspartate 101 each act as charge relay system in the active site. Serine 195 serves as the catalytic Charge relay system.

Belongs to the peptidase S1 family.

The protein localises to the secreted. The protein resides in the extracellular space. It carries out the reaction Preferential cleavage: Tyr-|-Xaa, Trp-|-Xaa, Phe-|-Xaa, Leu-|-Xaa.. The sequence is that of Chymotrypsin B from Gadus morhua (Atlantic cod).